The sequence spans 287 residues: Lipoyl synthase (287 aa).

Cysteine 34, cysteine 39, cysteine 45, cysteine 60, cysteine 64, cysteine 67, and serine 273 together coordinate [4Fe-4S] cluster. In terms of domain architecture, Radical SAM core spans 46-262 (WNKRHATVMI…KYIAYSKGFL (217 aa)).

Belongs to the radical SAM superfamily. Lipoyl synthase family. [4Fe-4S] cluster is required as a cofactor.

It is found in the cytoplasm. It catalyses the reaction [[Fe-S] cluster scaffold protein carrying a second [4Fe-4S](2+) cluster] + N(6)-octanoyl-L-lysyl-[protein] + 2 oxidized [2Fe-2S]-[ferredoxin] + 2 S-adenosyl-L-methionine + 4 H(+) = [[Fe-S] cluster scaffold protein] + N(6)-[(R)-dihydrolipoyl]-L-lysyl-[protein] + 4 Fe(3+) + 2 hydrogen sulfide + 2 5'-deoxyadenosine + 2 L-methionine + 2 reduced [2Fe-2S]-[ferredoxin]. It functions in the pathway protein modification; protein lipoylation via endogenous pathway; protein N(6)-(lipoyl)lysine from octanoyl-[acyl-carrier-protein]: step 2/2. Functionally, catalyzes the radical-mediated insertion of two sulfur atoms into the C-6 and C-8 positions of the octanoyl moiety bound to the lipoyl domains of lipoate-dependent enzymes, thereby converting the octanoylated domains into lipoylated derivatives. The protein is Lipoyl synthase of Wolbachia sp. subsp. Drosophila simulans (strain wRi).